The following is a 399-amino-acid chain: 3-methyl-2-oxobutanoate hydroxymethyltransferase 2, mitochondrial (399 aa).

Residues M1 to R90 constitute a mitochondrion transit peptide. Positions 125 and 164 each coordinate Mg(2+). 3-methyl-2-oxobutanoate contacts are provided by residues D125 to S126, D164, and K194. E196 serves as a coordination point for Mg(2+). The active-site Proton acceptor is the E264.

This sequence belongs to the PanB family. Requires Mg(2+) as cofactor.

The protein localises to the mitochondrion. It carries out the reaction 3-methyl-2-oxobutanoate + (6R)-5,10-methylene-5,6,7,8-tetrahydrofolate + H2O = 2-dehydropantoate + (6S)-5,6,7,8-tetrahydrofolate. It participates in cofactor biosynthesis; (R)-pantothenate biosynthesis; (R)-pantoate from 3-methyl-2-oxobutanoate: step 1/2. In terms of biological role, catalyzes the reversible reaction in which hydroxymethyl group from 5,10-methylenetetrahydrofolate is transferred onto alpha-ketoisovalerate to form ketopantoate. The protein is 3-methyl-2-oxobutanoate hydroxymethyltransferase 2, mitochondrial (KPHMT2) of Oryza sativa subsp. japonica (Rice).